The chain runs to 190 residues: ATP synthase subunit delta (190 aa).

Belongs to the ATPase delta chain family. As to quaternary structure, F-type ATPases have 2 components, F(1) - the catalytic core - and F(0) - the membrane proton channel. F(1) has five subunits: alpha(3), beta(3), gamma(1), delta(1), epsilon(1). F(0) has three main subunits: a(1), b(2) and c(10-14). The alpha and beta chains form an alternating ring which encloses part of the gamma chain. F(1) is attached to F(0) by a central stalk formed by the gamma and epsilon chains, while a peripheral stalk is formed by the delta and b chains.

It is found in the cell inner membrane. In terms of biological role, f(1)F(0) ATP synthase produces ATP from ADP in the presence of a proton or sodium gradient. F-type ATPases consist of two structural domains, F(1) containing the extramembraneous catalytic core and F(0) containing the membrane proton channel, linked together by a central stalk and a peripheral stalk. During catalysis, ATP synthesis in the catalytic domain of F(1) is coupled via a rotary mechanism of the central stalk subunits to proton translocation. Functionally, this protein is part of the stalk that links CF(0) to CF(1). It either transmits conformational changes from CF(0) to CF(1) or is implicated in proton conduction. The sequence is that of ATP synthase subunit delta from Petrotoga mobilis (strain DSM 10674 / SJ95).